The chain runs to 152 residues: Transcriptional regulator MraZ (152 aa).

2 SpoVT-AbrB domains span residues 5–52 (ANAI…PLNE) and 81–124 (ATES…DEDM).

This sequence belongs to the MraZ family. Forms oligomers.

Its subcellular location is the cytoplasm. The protein localises to the nucleoid. In Psychromonas ingrahamii (strain DSM 17664 / CCUG 51855 / 37), this protein is Transcriptional regulator MraZ.